A 314-amino-acid polypeptide reads, in one-letter code: Zinc transporter ZIP3 (314 aa).

The Extracellular segment spans residues 1 to 3 (MNL). A helical membrane pass occupies residues 4–24 (IFAKVLCLLAILVLMMLGSLI). Over 25-41 (PVKISEADFDKSSRSRK) the chain is Cytoplasmic. The chain crosses the membrane as a helical span at residues 42–62 (ILSLSNSFAGGVFLATCFNAL). Over 63–84 (LPAVREKFFDLLKIGNISTDYP) the chain is Extracellular. Residues 85 to 105 (LAETIMMVGFFLTVFVEQTVM) traverse the membrane as a helical segment. The Cytoplasmic portion of the chain corresponds to 106–169 (TFRKEKPSFI…KELSSSSPIR (64 aa)). The chain crosses the membrane as a helical span at residues 170-190 (LFSLVFALSAHSVFEGLALGL). At 191–196 (QEDGNK) the chain is on the extracellular side. The chain crosses the membrane as a helical span at residues 197-217 (LLSLFIGVVIHETLVAMALGV). The Cytoplasmic segment spans residues 218-229 (SMAKVNTHLKDA). A helical transmembrane segment spans residues 230–250 (IKMAVLVSTMIPIGIVVGMAI). At 251–262 (QSAQNMASSIAS) the chain is on the extracellular side. Residues 263 to 283 (ALLQGIAGGTFIFVTFFEILV) traverse the membrane as a helical segment. Over 284–292 (KELEEKNDR) the chain is Cytoplasmic. The chain crosses the membrane as a helical span at residues 293–313 (LLKVLFLVLGYTVLAVLVLFK). Position 314 (Trp-314) is a topological domain, extracellular.

The protein belongs to the ZIP transporter (TC 2.A.5) family.

The protein resides in the cell membrane. The protein localises to the apical cell membrane. The enzyme catalyses Zn(2+)(in) = Zn(2+)(out). Its function is as follows. Transporter for the divalent cation Zn(2+). Mediates the influx of Zn(2+) into cells from extracellular space. In Xenopus tropicalis (Western clawed frog), this protein is Zinc transporter ZIP3 (slc39a3).